A 466-amino-acid polypeptide reads, in one-letter code: ATP synthase subunit beta (466 aa).

Glycine 153 to threonine 160 is a binding site for ATP.

The protein belongs to the ATPase alpha/beta chains family. As to quaternary structure, F-type ATPases have 2 components, CF(1) - the catalytic core - and CF(0) - the membrane proton channel. CF(1) has five subunits: alpha(3), beta(3), gamma(1), delta(1), epsilon(1). CF(0) has three main subunits: a(1), b(2) and c(9-12). The alpha and beta chains form an alternating ring which encloses part of the gamma chain. CF(1) is attached to CF(0) by a central stalk formed by the gamma and epsilon chains, while a peripheral stalk is formed by the delta and b chains.

Its subcellular location is the cell membrane. The enzyme catalyses ATP + H2O + 4 H(+)(in) = ADP + phosphate + 5 H(+)(out). Produces ATP from ADP in the presence of a proton gradient across the membrane. The catalytic sites are hosted primarily by the beta subunits. This Oenococcus oeni (strain ATCC BAA-331 / PSU-1) protein is ATP synthase subunit beta.